The primary structure comprises 281 residues: Diaminopimelate epimerase (281 aa).

Substrate contacts are provided by asparagine 14 and asparagine 65. The Proton donor role is filled by cysteine 74. Substrate is bound by residues 75-76 (GN), asparagine 165, asparagine 198, and 216-217 (ER). Cysteine 225 functions as the Proton acceptor in the catalytic mechanism. 226 to 227 (GT) provides a ligand contact to substrate.

Belongs to the diaminopimelate epimerase family. In terms of assembly, homodimer.

Its subcellular location is the cytoplasm. It catalyses the reaction (2S,6S)-2,6-diaminopimelate = meso-2,6-diaminopimelate. Its pathway is amino-acid biosynthesis; L-lysine biosynthesis via DAP pathway; DL-2,6-diaminopimelate from LL-2,6-diaminopimelate: step 1/1. Catalyzes the stereoinversion of LL-2,6-diaminopimelate (L,L-DAP) to meso-diaminopimelate (meso-DAP), a precursor of L-lysine and an essential component of the bacterial peptidoglycan. The polypeptide is Diaminopimelate epimerase (Leptospira borgpetersenii serovar Hardjo-bovis (strain JB197)).